Here is a 56-residue protein sequence, read N- to C-terminus: Large ribosomal subunit protein bL32B (56 aa).

Basic residues predominate over residues Met-1–Gln-19. Positions Met-1–Ala-22 are disordered.

It belongs to the bacterial ribosomal protein bL32 family.

This is Large ribosomal subunit protein bL32B (rpmF2) from Streptomyces coelicolor (strain ATCC BAA-471 / A3(2) / M145).